We begin with the raw amino-acid sequence, 298 residues long: Tyrosine recombinase XerC (298 aa).

The 87-residue stretch at 2–88 (TDLHTDVERY…ALRSFFDWLV (87 aa)) folds into the Core-binding (CB) domain. Positions 109–288 (HLPKNIDVDD…DFQHLASVYD (180 aa)) constitute a Tyr recombinase domain. Active-site residues include Arg148, Lys172, His240, Arg243, and His266. Tyr275 (O-(3'-phospho-DNA)-tyrosine intermediate) is an active-site residue.

The protein belongs to the 'phage' integrase family. XerC subfamily. Forms a cyclic heterotetrameric complex composed of two molecules of XerC and two molecules of XerD, in which XerC interacts with XerD via its C-terminal region, XerD interacts with XerC via its C-terminal region and so on.

It localises to the cytoplasm. FtsK may regulate the catalytic switch between XerC and XerD in the heterotetrameric complex during the two steps of the recombination process. In terms of biological role, site-specific tyrosine recombinase, which acts by catalyzing the cutting and rejoining of the recombining DNA molecules. Binds cooperatively to specific DNA consensus sequences that are separated from XerD binding sites by a short central region, forming the heterotetrameric XerC-XerD complex that recombines DNA substrates. The complex is essential to convert dimers of the bacterial chromosome into monomers to permit their segregation at cell division. It also contributes to the segregational stability of plasmids. In the complex XerC specifically exchanges the top DNA strands. The protein is Tyrosine recombinase XerC of Shigella dysenteriae serotype 1 (strain Sd197).